The chain runs to 952 residues: Protocadherin-20 (952 aa).

The N-terminal stretch at 1–60 is a signal peptide; it reads MRGRGNARSLLVQAVSLRPATWHPCLDMGHLHRPSSRTSHRNLPHVFLLFLFVGPFNCLA. Residues 61–891 are Extracellular-facing; sequence SYSRATELLY…VESMSCMPTL (831 aa). Cadherin domains are found at residues 64–210, 211–321, 322–536, 537–640, 641–743, and 747–864; these read RATE…APQF, PISE…CPLF, IDSQ…APVF, LQPL…SPRF, INKD…PPLV, and QSNM…EPEI. N-linked (GlcNAc...) asparagine glycosylation occurs at N135. Residues N327 and N333 are each glycosylated (N-linked (GlcNAc...) asparagine). N-linked (GlcNAc...) asparagine glycosylation is found at N681, N749, N804, N845, and N850. The helical transmembrane segment at 892-912 threads the bilayer; sequence VALSVISLGSITLVTGMGIYI. Topologically, residues 913–952 are cytoplasmic; the sequence is CLRKGKKHHREDDNLEVQIPLKGKIDLCMRERKPVDISNI.

The protein resides in the cell membrane. Its function is as follows. Potential calcium-dependent cell-adhesion protein. The chain is Protocadherin-20 (Pcdh20) from Mus musculus (Mouse).